The primary structure comprises 306 residues: Dermonecrotic toxin LiSicTox-alphaIA2bi (306 aa).

The N-terminal stretch at 1-18 (MLPYIALILVCWSVLSQA) is a signal peptide. Positions 19–26 (AQTDVEGR) are excised as a propeptide. The active site involves His-38. Mg(2+) is bound by residues Glu-58 and Asp-60. Residue His-74 is the Nucleophile of the active site. 2 disulfide bridges follow: Cys-78/Cys-84 and Cys-80/Cys-223. Position 118 (Asp-118) interacts with Mg(2+). Asn-283 is a glycosylation site (N-linked (GlcNAc...) asparagine).

It belongs to the arthropod phospholipase D family. Class II subfamily. The cofactor is Mg(2+). In terms of tissue distribution, expressed by the venom gland.

Its subcellular location is the secreted. It carries out the reaction an N-(acyl)-sphingosylphosphocholine = an N-(acyl)-sphingosyl-1,3-cyclic phosphate + choline. The enzyme catalyses an N-(acyl)-sphingosylphosphoethanolamine = an N-(acyl)-sphingosyl-1,3-cyclic phosphate + ethanolamine. The catalysed reaction is a 1-acyl-sn-glycero-3-phosphocholine = a 1-acyl-sn-glycero-2,3-cyclic phosphate + choline. It catalyses the reaction a 1-acyl-sn-glycero-3-phosphoethanolamine = a 1-acyl-sn-glycero-2,3-cyclic phosphate + ethanolamine. Functionally, dermonecrotic toxins cleave the phosphodiester linkage between the phosphate and headgroup of certain phospholipids (sphingolipid and lysolipid substrates), forming an alcohol (often choline) and a cyclic phosphate. This toxin acts on sphingomyelin (SM). It may also act on ceramide phosphoethanolamine (CPE), lysophosphatidylcholine (LPC) and lysophosphatidylethanolamine (LPE), but not on lysophosphatidylserine (LPS), and lysophosphatidylglycerol (LPG). It acts by transphosphatidylation, releasing exclusively cyclic phosphate products as second products. Induces dermonecrosis, hemolysis, increased vascular permeability, edema, inflammatory response, and platelet aggregation. The sequence is that of Dermonecrotic toxin LiSicTox-alphaIA2bi from Loxosceles intermedia (Brown spider).